The primary structure comprises 358 residues: Fructose-bisphosphate aldolase (358 aa).

Position 61 (Ser61) interacts with D-glyceraldehyde 3-phosphate. The Proton donor role is filled by Asp108. Zn(2+) contacts are provided by His109, Asp143, Glu173, and His225. Residue Gly226 participates in dihydroxyacetone phosphate binding. His264 is a Zn(2+) binding site. Dihydroxyacetone phosphate-binding positions include 265-267 (GGS) and 286-289 (NIDT). Phosphothreonine occurs at positions 289, 312, 340, and 342.

The protein belongs to the class II fructose-bisphosphate aldolase family. As to quaternary structure, homodimer. Zn(2+) serves as cofactor.

The catalysed reaction is beta-D-fructose 1,6-bisphosphate = D-glyceraldehyde 3-phosphate + dihydroxyacetone phosphate. Its pathway is carbohydrate degradation; glycolysis; D-glyceraldehyde 3-phosphate and glycerone phosphate from D-glucose: step 4/4. Functionally, catalyzes the aldol condensation of dihydroxyacetone phosphate (DHAP or glycerone-phosphate) with glyceraldehyde 3-phosphate (G3P) to form fructose 1,6-bisphosphate (FBP) in gluconeogenesis and the reverse reaction in glycolysis. In Schizosaccharomyces pombe (strain 972 / ATCC 24843) (Fission yeast), this protein is Fructose-bisphosphate aldolase (fba1).